Consider the following 192-residue polypeptide: Segregation and condensation protein B (192 aa).

This sequence belongs to the ScpB family. As to quaternary structure, homodimer. Homodimerization may be required to stabilize the binding of ScpA to the Smc head domains. Component of a cohesin-like complex composed of ScpA, ScpB and the Smc homodimer, in which ScpA and ScpB bind to the head domain of Smc. The presence of the three proteins is required for the association of the complex with DNA.

It is found in the cytoplasm. Its function is as follows. Participates in chromosomal partition during cell division. May act via the formation of a condensin-like complex containing Smc and ScpA that pull DNA away from mid-cell into both cell halves. The sequence is that of Segregation and condensation protein B from Oceanobacillus iheyensis (strain DSM 14371 / CIP 107618 / JCM 11309 / KCTC 3954 / HTE831).